Here is a 291-residue protein sequence, read N- to C-terminus: ATP synthase gamma chain (291 aa).

The protein belongs to the ATPase gamma chain family. In terms of assembly, F-type ATPases have 2 components, CF(1) - the catalytic core - and CF(0) - the membrane proton channel. CF(1) has five subunits: alpha(3), beta(3), gamma(1), delta(1), epsilon(1). CF(0) has three main subunits: a, b and c.

It localises to the cell inner membrane. Functionally, produces ATP from ADP in the presence of a proton gradient across the membrane. The gamma chain is believed to be important in regulating ATPase activity and the flow of protons through the CF(0) complex. This is ATP synthase gamma chain from Verminephrobacter eiseniae (strain EF01-2).